Reading from the N-terminus, the 345-residue chain is Type II restriction enzyme HgiCI (345 aa).

The enzyme catalyses Endonucleolytic cleavage of DNA to give specific double-stranded fragments with terminal 5'-phosphates.. In terms of biological role, a P subtype restriction enzyme that recognizes the double-stranded sequence 5'-GGYRCC-3' and cleaves after G-1. This Herpetosiphon aurantiacus (Herpetosiphon giganteus) protein is Type II restriction enzyme HgiCI (hgiCIR).